Here is a 977-residue protein sequence, read N- to C-terminus: Receptor-like protein kinase 7 (977 aa).

A signal peptide spans 1-28 (MAPSLRNFNFFHRFSTFLVFSLFSVVSS). Residues 29 to 608 (DDLQVLLKLK…NPSRSHGDTR (580 aa)) are Extracellular-facing. LRR repeat units follow at residues 71–95 (RGNV…SVCE), 96–119 (IQSL…DLKN), and 121–145 (TSLK…SLNQ). N-linked (GlcNAc...) asparagine glycosylation is found at Asn73 and Asn119. N-linked (GlcNAc...) asparagine glycosylation is found at Asn152 and Asn167. LRR repeat units follow at residues 168-194 (ATSL…VVSL), 195-218 (KKLS…IGDL), 219-242 (TELR…ISKL), 244-265 (NLWQ…GFGN), 267-289 (KNLT…LRSL), 290-312 (TNLV…EFGE), 313-337 (FKDL…LGSL), 339-361 (DFDF…MCKN), 362-385 (GKMK…YANC), 386-409 (LTLQ…LWGL), 411-433 (KLEI…IKNG), 434-457 (KMLG…IGDT), 458-481 (ESLT…IGKL), 482-505 (KGLS…IGSC), 507-529 (MLSD…LGSL), 530-553 (PTLN…LSSL), and 555-578 (LSLL…SYNG). Residue Asn204 is glycosylated (N-linked (GlcNAc...) asparagine). N-linked (GlcNAc...) asparagine glycosylation is found at Asn252 and Asn268. Asn318 is a glycosylation site (N-linked (GlcNAc...) asparagine). N-linked (GlcNAc...) asparagine glycans are attached at residues Asn373 and Asn399. N-linked (GlcNAc...) asparagine glycosylation is found at Asn536 and Asn577. Residues 609-629 (VFVLCIVFGLLILLASLVFFL) form a helical membrane-spanning segment. Topologically, residues 630 to 977 (YLKKTEKKEG…ESDVKVKEIS (348 aa)) are cytoplasmic. The region spanning 666–959 (IKEENLIGRG…QMIEDAEPCR (294 aa)) is the Protein kinase domain. Residues 672–680 (IGRGGCGDV) and Lys694 contribute to the ATP site. Catalysis depends on Asp805, which acts as the Proton acceptor.

It belongs to the protein kinase superfamily. Ser/Thr protein kinase family. In terms of assembly, interacts with PIP1. Expressed in roots, stems and dry seeds. Expressed at junctions between organs, such as the insertion zones of stamens, petals and sepals, the transition zones of floral stem and pedicel, pedicel and silique, and floral stem and cauline leaves.

Its subcellular location is the membrane. The enzyme catalyses L-seryl-[protein] + ATP = O-phospho-L-seryl-[protein] + ADP + H(+). It carries out the reaction L-threonyl-[protein] + ATP = O-phospho-L-threonyl-[protein] + ADP + H(+). Its function is as follows. Plays a role in pattern-triggered immunity (PTI) signaling induced by pathogen-associated molecular patterns (PAMPs). Acts as a receptor for PIP1 defense peptide. PIP1 is an endogenous secreted peptide that acts as elicitor of immune response and positive regulator of defense response. Involved in the control of seed germination speed, in tolerance to oxidative stress and in maintaining seed longevity. The sequence is that of Receptor-like protein kinase 7 from Arabidopsis thaliana (Mouse-ear cress).